The chain runs to 422 residues: Serine--tRNA ligase (422 aa).

L-serine is bound at residue 231–233; it reads TAE. An ATP-binding site is contributed by 261-263; that stretch reads RSE. E284 is a binding site for L-serine. Residue 348–351 coordinates ATP; that stretch reads EISS. Residue S383 coordinates L-serine.

The protein belongs to the class-II aminoacyl-tRNA synthetase family. Type-1 seryl-tRNA synthetase subfamily. As to quaternary structure, homodimer. The tRNA molecule binds across the dimer.

Its subcellular location is the cytoplasm. The enzyme catalyses tRNA(Ser) + L-serine + ATP = L-seryl-tRNA(Ser) + AMP + diphosphate + H(+). It catalyses the reaction tRNA(Sec) + L-serine + ATP = L-seryl-tRNA(Sec) + AMP + diphosphate + H(+). Its pathway is aminoacyl-tRNA biosynthesis; selenocysteinyl-tRNA(Sec) biosynthesis; L-seryl-tRNA(Sec) from L-serine and tRNA(Sec): step 1/1. In terms of biological role, catalyzes the attachment of serine to tRNA(Ser). Is also able to aminoacylate tRNA(Sec) with serine, to form the misacylated tRNA L-seryl-tRNA(Sec), which will be further converted into selenocysteinyl-tRNA(Sec). This Mycoplasmopsis agalactiae (strain NCTC 10123 / CIP 59.7 / PG2) (Mycoplasma agalactiae) protein is Serine--tRNA ligase.